A 175-amino-acid chain; its full sequence is Isopentenyl-diphosphate Delta-isomerase (175 aa).

Histidine 22 and histidine 29 together coordinate Mn(2+). In terms of domain architecture, Nudix hydrolase spans 27–160 (KLHRAFSVLL…PAAYTPWLAE (134 aa)). The active site involves cysteine 64. Residue cysteine 64 coordinates Mg(2+). Histidine 66 is a Mn(2+) binding site. Glutamate 84 lines the Mg(2+) pocket. Glutamate 110 and glutamate 112 together coordinate Mn(2+). Glutamate 112 is an active-site residue.

The protein belongs to the IPP isomerase type 1 family. It depends on Mg(2+) as a cofactor. Requires Mn(2+) as cofactor.

The protein resides in the cytoplasm. It catalyses the reaction isopentenyl diphosphate = dimethylallyl diphosphate. It participates in isoprenoid biosynthesis; dimethylallyl diphosphate biosynthesis; dimethylallyl diphosphate from isopentenyl diphosphate: step 1/1. In terms of biological role, catalyzes the 1,3-allylic rearrangement of the homoallylic substrate isopentenyl (IPP) to its highly electrophilic allylic isomer, dimethylallyl diphosphate (DMAPP). This Nocardia farcinica (strain IFM 10152) protein is Isopentenyl-diphosphate Delta-isomerase.